The sequence spans 476 residues: tRNA sulfurtransferase (476 aa).

The THUMP domain maps to 54–156 (AENDIPLSKV…GKDALIYDKI (103 aa)). Residues 174 to 175 (MV), Lys-256, Gly-278, and Gln-287 contribute to the ATP site. Cys-334 and Cys-433 are oxidised to a cystine. Positions 388–470 (NLEDAVFIDL…LSKQKGSVDE (83 aa)) constitute a Rhodanese domain. The Cysteine persulfide intermediate role is filled by Cys-433.

This sequence belongs to the ThiI family.

It localises to the cytoplasm. The enzyme catalyses [ThiI sulfur-carrier protein]-S-sulfanyl-L-cysteine + a uridine in tRNA + 2 reduced [2Fe-2S]-[ferredoxin] + ATP + H(+) = [ThiI sulfur-carrier protein]-L-cysteine + a 4-thiouridine in tRNA + 2 oxidized [2Fe-2S]-[ferredoxin] + AMP + diphosphate. The catalysed reaction is [ThiS sulfur-carrier protein]-C-terminal Gly-Gly-AMP + S-sulfanyl-L-cysteinyl-[cysteine desulfurase] + AH2 = [ThiS sulfur-carrier protein]-C-terminal-Gly-aminoethanethioate + L-cysteinyl-[cysteine desulfurase] + A + AMP + 2 H(+). It functions in the pathway cofactor biosynthesis; thiamine diphosphate biosynthesis. Functionally, catalyzes the ATP-dependent transfer of a sulfur to tRNA to produce 4-thiouridine in position 8 of tRNAs, which functions as a near-UV photosensor. Also catalyzes the transfer of sulfur to the sulfur carrier protein ThiS, forming ThiS-thiocarboxylate. This is a step in the synthesis of thiazole, in the thiamine biosynthesis pathway. The sulfur is donated as persulfide by IscS. This chain is tRNA sulfurtransferase, found in Thermoplasma volcanium (strain ATCC 51530 / DSM 4299 / JCM 9571 / NBRC 15438 / GSS1).